The primary structure comprises 480 residues: NADH-quinone oxidoreductase subunit N 1 (480 aa).

Transmembrane regions (helical) follow at residues 12–32 (LSMPELILAVGAMALLMIGVF), 38–58 (TPTVTGLAVAVLIIAGLWLVL), 78–98 (FMKVLALIGSITVMVMTVGHA), 106–126 (FEFPVLLVLATLGMLLMISAN), 128–148 (LISLYLSLELQSLALYVVAAI), 163–183 (FVLGALSSGMMLYGMSLVYGF), 203–223 (LGLVFGLVFILAGLAFKISAV), 241–261 (TAFFAAGPKVAAISILVRIVI), 271–291 (WQQIIVFISIASMLLGSFAAI), 303–323 (SSIGHMGYALVGLAAGSMAGV), 326–346 (VILYMLIYMVMTLGTFACILA), 372–392 (ATVLTILMFSLAGIPPLAGFF), 396–416 (FVFVAAIEAQLYGLAIIGVLA), and 449–469 (LVFGLSGLFVLGYVLIGGPLG).

The protein belongs to the complex I subunit 2 family. As to quaternary structure, NDH-1 is composed of 14 different subunits. Subunits NuoA, H, J, K, L, M, N constitute the membrane sector of the complex.

The protein resides in the cell inner membrane. The catalysed reaction is a quinone + NADH + 5 H(+)(in) = a quinol + NAD(+) + 4 H(+)(out). NDH-1 shuttles electrons from NADH, via FMN and iron-sulfur (Fe-S) centers, to quinones in the respiratory chain. The immediate electron acceptor for the enzyme in this species is believed to be ubiquinone. Couples the redox reaction to proton translocation (for every two electrons transferred, four hydrogen ions are translocated across the cytoplasmic membrane), and thus conserves the redox energy in a proton gradient. The sequence is that of NADH-quinone oxidoreductase subunit N 1 from Rhizobium meliloti (strain 1021) (Ensifer meliloti).